Here is a 344-residue protein sequence, read N- to C-terminus: Membrane progestin receptor delta (344 aa).

Over 1 to 51 the chain is Cytoplasmic; sequence MLSLKLPQLLQVHQVPRVFWEDGIMSGYRRPTSSALDCVLSSFQMTNETVN. Residues 52–72 form a helical membrane-spanning segment; sequence IWTHFLPTWYFLWRLLALAGG. The Extracellular segment spans residues 73–83; that stretch reads PGFRAEPYHWP. A helical transmembrane segment spans residues 84–104; it reads LLVFLLPACLYPFASCCAHTF. Over 105–113 the chain is Cytoplasmic; that stretch reads SSMSPRMRH. The helical transmembrane segment at 114–134 threads the bilayer; the sequence is ICYFLDYGALSLYSLGCAFPY. At 135–147 the chain is on the extracellular side; the sequence is AAYSMPASWLHGH. A helical transmembrane segment spans residues 148-168; the sequence is LHQFFVPAAALNSFLCTGLSC. The Cytoplasmic segment spans residues 169–217; that stretch reads YSRFLELESPGLSKVLRTGAFAYPFLFDNLPLFYRLGLCWGRGHGCGQE. The helical transmembrane segment at 218–238 threads the bilayer; the sequence is ALSTSHGYHLFCALLTGFLFA. The Extracellular portion of the chain corresponds to 239-258; it reads SHLPERLAPGRFDYIGHSHQ. A helical transmembrane segment spans residues 259–279; it reads LFHICAVLGTHFQLEAVLADM. At 280–292 the chain is on the cytoplasmic side; sequence GSRRAWLATQEPA. Residues 293–313 traverse the membrane as a helical segment; sequence LGLAGTVATLVLAAAGNLLII. Topologically, residues 314-344 are extracellular; sequence AAFTATLLRAPSTCPLLQGGPLEGGTQAKQQ.

This sequence belongs to the ADIPOR family. In terms of assembly, homodimer. Brain specific. Highly expressed in the hypothalamus, also expressed in forebrain, amygdala, corpus callosum and spinal cord.

The protein localises to the cell membrane. Its function is as follows. Plasma membrane progesterone (P4) receptor coupled to G proteins. Seems to act through a G(s) mediated pathway. Involved in neurosteroid inhibition of apoptosis. May be involved in regulating rapid P4 signaling in the nervous system. Also binds dehydroepiandrosterone (DHEA), pregnanolone, pregnenolone and allopregnanolone. The polypeptide is Membrane progestin receptor delta (Homo sapiens (Human)).